The following is a 149-amino-acid chain: Large ribosomal subunit protein bL9 (149 aa).

Belongs to the bacterial ribosomal protein bL9 family.

Binds to the 23S rRNA. This chain is Large ribosomal subunit protein bL9 (rplI), found in Geobacillus stearothermophilus (Bacillus stearothermophilus).